Consider the following 588-residue polypeptide: A-type ATP synthase subunit A 3 (588 aa).

234-241 is a binding site for ATP; that stretch reads GPFGSGKT.

The protein belongs to the ATPase alpha/beta chains family. As to quaternary structure, has multiple subunits with at least A(3), B(3), C, D, E, F, H, I and proteolipid K(x).

The protein localises to the cell membrane. The enzyme catalyses ATP + H2O + 4 H(+)(in) = ADP + phosphate + 5 H(+)(out). Functionally, component of the A-type ATP synthase that produces ATP from ADP in the presence of a proton gradient across the membrane. The A chain is the catalytic subunit. The polypeptide is A-type ATP synthase subunit A 3 (Methanospirillum hungatei JF-1 (strain ATCC 27890 / DSM 864 / NBRC 100397 / JF-1)).